The chain runs to 98 residues: Citrate lyase acyl carrier protein (98 aa).

Position 14 is an O-(phosphoribosyl dephospho-coenzyme A)serine (Ser14).

Belongs to the CitD family. As to quaternary structure, oligomer with a subunit composition of (alpha,beta,gamma)6.

The protein localises to the cytoplasm. In terms of biological role, covalent carrier of the coenzyme of citrate lyase. In Shigella flexneri, this protein is Citrate lyase acyl carrier protein.